The chain runs to 438 residues: 5-methylthioadenosine/S-adenosylhomocysteine deaminase (438 aa).

Positions 71 and 73 each coordinate Zn(2+). Residues glutamate 100 and histidine 192 each coordinate substrate. Histidine 219 serves as a coordination point for Zn(2+). Residues glutamate 222 and aspartate 307 each contribute to the substrate site. Zn(2+) is bound at residue aspartate 307.

It belongs to the metallo-dependent hydrolases superfamily. MTA/SAH deaminase family. It depends on Zn(2+) as a cofactor.

It carries out the reaction S-adenosyl-L-homocysteine + H2O + H(+) = S-inosyl-L-homocysteine + NH4(+). The enzyme catalyses S-methyl-5'-thioadenosine + H2O + H(+) = S-methyl-5'-thioinosine + NH4(+). In terms of biological role, catalyzes the deamination of 5-methylthioadenosine and S-adenosyl-L-homocysteine into 5-methylthioinosine and S-inosyl-L-homocysteine, respectively. Is also able to deaminate adenosine. This chain is 5-methylthioadenosine/S-adenosylhomocysteine deaminase, found in Syntrophobacter fumaroxidans (strain DSM 10017 / MPOB).